A 386-amino-acid polypeptide reads, in one-letter code: Demethylsterigmatocystin 6-O-methyltransferase (386 aa).

137–150 provides a ligand contact to substrate; sequence FDISGPCTQILPDF. A substrate binding region spans residues 177 to 197; that stretch reads MFEWMPQHPKHMESLGHLMAL. Residues 228-229, D253, 273-274, and R289 contribute to the S-adenosyl-L-methionine site; these read GG and NF. Catalysis depends on H293, which acts as the Proton acceptor.

It belongs to the class I-like SAM-binding methyltransferase superfamily. Cation-independent O-methyltransferase family. COMT subfamily.

It catalyses the reaction 6-demethylsterigmatocystin + S-adenosyl-L-methionine = sterigmatocystin + S-adenosyl-L-homocysteine + H(+). Its pathway is mycotoxin biosynthesis; aflatoxin biosynthesis. Catalyzes both the conversion of demethylsterigmatocystin (DMST) to sterigmatocystin and the conversion of dihydrodemethylsterigmatocystin to dihydrosterigmatocystin (DHDMST) during aflatoxin biosynthesis. The chain is Demethylsterigmatocystin 6-O-methyltransferase (omtB) from Aspergillus flavus (strain ATCC 200026 / FGSC A1120 / IAM 13836 / NRRL 3357 / JCM 12722 / SRRC 167).